Here is a 287-residue protein sequence, read N- to C-terminus: 3-beta-hydroxysteroid sulfotransferase (287 aa).

K44 to W49 contributes to the 3'-phosphoadenylyl sulfate binding site. Positions 72 and 77 each coordinate substrate. The active-site Proton acceptor is the H99. 3'-phosphoadenylyl sulfate contacts are provided by residues R121, S129, Y184, S218–M223, and R247–G249.

The protein belongs to the sulfotransferase 1 family. Homodimer. As to expression, liver, intestine and kidney.

The protein localises to the cytoplasm. The enzyme catalyses an alcohol + 3'-phosphoadenylyl sulfate = an alkyl sulfate + adenosine 3',5'-bisphosphate + H(+). In terms of biological role, sulfotransferase that utilizes 3'-phospho-5'-adenylyl sulfate (PAPS) as sulfonate donor to catalyze the sulfonation of 3-beta-hydroxyl groups of neutral steroids. High preference for C21 steroid (pregnenolone). The protein is 3-beta-hydroxysteroid sulfotransferase (STD2) of Cavia porcellus (Guinea pig).